Here is a 187-residue protein sequence, read N- to C-terminus: Elongation factor P (187 aa).

The protein belongs to the elongation factor P family.

The protein resides in the cytoplasm. It participates in protein biosynthesis; polypeptide chain elongation. Involved in peptide bond synthesis. Stimulates efficient translation and peptide-bond synthesis on native or reconstituted 70S ribosomes in vitro. Probably functions indirectly by altering the affinity of the ribosome for aminoacyl-tRNA, thus increasing their reactivity as acceptors for peptidyl transferase. In Corynebacterium jeikeium (strain K411), this protein is Elongation factor P.